Here is a 146-residue protein sequence, read N- to C-terminus: Allograft inflammatory factor 1 (146 aa).

The residue at position 1 (Ser1) is an N-acetylserine. Position 10 is an N6-acetyllysine (Lys10). Phosphoserine is present on Ser38. The 36-residue stretch at 44 to 79 (RKLEAFKQKYMEFDLNGNGDIDIMSLKRMLEKLGVP) folds into the EF-hand 1 domain. Residues Asp57, Asn59, Asn61, Asp63, and Thr99 each contribute to the Ca(2+) site. In terms of domain architecture, EF-hand 2; degenerate spans 81–115 (THLELKKLIKEVSSGSGETFSYSIFLKMMLGKRSA). The segment at 127 to 146 (AREQEKPTGPPAKKAISELP) is disordered.

In terms of assembly, homodimer (Potential). Monomer. Interacts with LCP1. Microglial cells in the central nervous system and dendritic cells and macrophages in several organs.

Its subcellular location is the cytoplasm. It is found in the cytoskeleton. The protein localises to the cell projection. It localises to the ruffle membrane. The protein resides in the phagocytic cup. In terms of biological role, actin-binding protein that enhances membrane ruffling and RAC activation. Enhances the actin-bundling activity of LCP1. Binds calcium. Plays a role in RAC signaling and in phagocytosis. May play a role in macrophage activation and function. Promotes the proliferation of vascular smooth muscle cells and of T-lymphocytes. Enhances lymphocyte migration. Plays a role in vascular inflammation. Has a dual influence on glucose-induced insulin secretion: inhibition at low concentration and stimulation at high concentrations. The sequence is that of Allograft inflammatory factor 1 (AIF1) from Sus scrofa (Pig).